We begin with the raw amino-acid sequence, 190 residues long: Orotate phosphoribosyltransferase (190 aa).

114–122 (EDVITTGGS) contacts 5-phospho-alpha-D-ribose 1-diphosphate. Orotate is bound by residues threonine 118 and arginine 146.

This sequence belongs to the purine/pyrimidine phosphoribosyltransferase family. PyrE subfamily. As to quaternary structure, homodimer. It depends on Mg(2+) as a cofactor.

The catalysed reaction is orotidine 5'-phosphate + diphosphate = orotate + 5-phospho-alpha-D-ribose 1-diphosphate. Its pathway is pyrimidine metabolism; UMP biosynthesis via de novo pathway; UMP from orotate: step 1/2. Functionally, catalyzes the transfer of a ribosyl phosphate group from 5-phosphoribose 1-diphosphate to orotate, leading to the formation of orotidine monophosphate (OMP). The protein is Orotate phosphoribosyltransferase of Pelotomaculum thermopropionicum (strain DSM 13744 / JCM 10971 / SI).